The chain runs to 331 residues: Probable allantoicase (331 aa).

Belongs to the allantoicase family.

It carries out the reaction allantoate + H2O = (S)-ureidoglycolate + urea. It participates in nitrogen metabolism; (S)-allantoin degradation; (S)-ureidoglycolate from allantoate (aminidohydrolase route): step 1/1. This Pseudomonas savastanoi pv. phaseolicola (strain 1448A / Race 6) (Pseudomonas syringae pv. phaseolicola (strain 1448A / Race 6)) protein is Probable allantoicase.